We begin with the raw amino-acid sequence, 158 residues long: Phosphopantetheine adenylyltransferase (158 aa).

Serine 8 provides a ligand contact to substrate. Residues serine 8 to phenylalanine 9 and histidine 16 contribute to the ATP site. Residues lysine 40, threonine 72, and arginine 86 each contribute to the substrate site. ATP is bound by residues glycine 87 to arginine 89, glutamate 97, and histidine 122 to serine 128.

It belongs to the bacterial CoaD family. As to quaternary structure, homohexamer. The cofactor is Mg(2+).

The protein resides in the cytoplasm. The enzyme catalyses (R)-4'-phosphopantetheine + ATP + H(+) = 3'-dephospho-CoA + diphosphate. It participates in cofactor biosynthesis; coenzyme A biosynthesis; CoA from (R)-pantothenate: step 4/5. Reversibly transfers an adenylyl group from ATP to 4'-phosphopantetheine, yielding dephospho-CoA (dPCoA) and pyrophosphate. The polypeptide is Phosphopantetheine adenylyltransferase (Prochlorococcus marinus (strain NATL1A)).